The following is a 115-amino-acid chain: Protein translation factor SUI1 homolog (115 aa).

Belongs to the SUI1 family.

In terms of biological role, probably involved in translation. The chain is Protein translation factor SUI1 homolog (TIF) from Zea mays (Maize).